The chain runs to 71 residues: Putative membrane protein insertion efficiency factor (71 aa).

This sequence belongs to the UPF0161 family.

The protein localises to the cell membrane. Its function is as follows. Could be involved in insertion of integral membrane proteins into the membrane. This is Putative membrane protein insertion efficiency factor from Acetivibrio thermocellus (strain ATCC 27405 / DSM 1237 / JCM 9322 / NBRC 103400 / NCIMB 10682 / NRRL B-4536 / VPI 7372) (Clostridium thermocellum).